The sequence spans 82 residues: RNA-binding protein Hfq (82 aa).

The Sm domain maps to 10–70 (DAFLNQVRKD…ISTVAPLRPI (61 aa)).

This sequence belongs to the Hfq family. In terms of assembly, homohexamer.

Functionally, RNA chaperone that binds small regulatory RNA (sRNAs) and mRNAs to facilitate mRNA translational regulation in response to envelope stress, environmental stress and changes in metabolite concentrations. Also binds with high specificity to tRNAs. In Syntrophomonas wolfei subsp. wolfei (strain DSM 2245B / Goettingen), this protein is RNA-binding protein Hfq.